A 119-amino-acid chain; its full sequence is DNA-binding protein inhibitor ID-3 (119 aa).

The region spanning arginine 28–leucine 80 is the bHLH domain.

In terms of assembly, homodimer, and heterodimer with other HLH proteins. Interacts with COPS5 and COPS7A. Interacts with IFI204. Interacts with GATA4 and NKX2-5. Interacts with ANKRD2; both proteins cooperate in myoblast differentiation. Interacts with CLOCK and BMAL1.

It localises to the nucleus. Transcriptional regulator (lacking a basic DNA binding domain) which negatively regulates the basic helix-loop-helix (bHLH) transcription factors by forming heterodimers and inhibiting their DNA binding and transcriptional activity. Implicated in regulating a variety of cellular processes, including cellular growth, senescence, differentiation, apoptosis, angiogenesis, and neoplastic transformation. Involved in myogenesis by inhibiting skeletal muscle and cardiac myocyte differentiation and promoting muscle precursor cells proliferation. Inhibits the binding of E2A-containing protein complexes to muscle creatine kinase E-box enhancer. Regulates the circadian clock by repressing the transcriptional activator activity of the CLOCK-BMAL1 heterodimer. The sequence is that of DNA-binding protein inhibitor ID-3 (ID3) from Canis lupus familiaris (Dog).